The sequence spans 376 residues: Arabinogalactan endo-beta-1,4-galactanase (376 aa).

Residues 1 to 17 (MKKKILAATAILLAAIA) form the signal peptide. Catalysis depends on Glu-161, which acts as the Proton donor. The active-site Nucleophile is the Glu-270. Asp-281 and Asn-285 together coordinate Ca(2+).

The protein belongs to the glycosyl hydrolase 53 family. Ca(2+) serves as cofactor.

The catalysed reaction is The enzyme specifically hydrolyzes (1-&gt;4)-beta-D-galactosidic linkages in type I arabinogalactans.. In Cellvibrio japonicus (strain Ueda107) (Pseudomonas fluorescens subsp. cellulosa), this protein is Arabinogalactan endo-beta-1,4-galactanase (ganB).